Reading from the N-terminus, the 120-residue chain is UPF0344 protein lmo2265 (120 aa).

The next 4 helical transmembrane spans lie at 3-23 (GYIH…ALLI), 33-53 (MLQM…IMMV), 62-82 (ILAI…EMLL), and 92-112 (GMFL…GFYL).

Belongs to the UPF0344 family.

The protein resides in the cell membrane. The chain is UPF0344 protein lmo2265 from Listeria monocytogenes serovar 1/2a (strain ATCC BAA-679 / EGD-e).